Reading from the N-terminus, the 1135-residue chain is APC membrane recruitment protein 1 (1135 aa).

M1 carries the N-acetylmethionine modification. 7 disordered regions span residues 1–115, 156–308, 339–405, 447–484, 736–764, 921–948, and 1007–1135; these read METQ…EGTG, AEKF…VGDP, SMTD…EDDD, GLAP…DDSG, NFGG…KEGN, LQAQ…PLSL, and VPES…NLAK. Positions 10 to 19 are enriched in low complexity; sequence QAKGAAASGS. Positions 23 to 35 are enriched in basic and acidic residues; sequence QTAEKGAKNKAAE. Positions 36 to 50 are enriched in low complexity; sequence ATEGPTSEPSSSGPG. The segment covering 73 to 83 has biased composition (gly residues); it reads FGGGRSKGSGK. Composition is skewed to basic and acidic residues over residues 94 to 107 and 196 to 208; these read KTHD…HGPE and GPER…HEHV. A compositionally biased stretch (pro residues) spans 238–248; the sequence is KVSPTPEPSPP. S246 carries the phosphoserine modification. Basic and acidic residues-rich tracts occupy residues 253–262 and 282–291; these read MACKDPEKPM and EEPHSPETGE. A compositionally biased stretch (acidic residues) spans 373–405; sequence ALPDDDDEEEEEEEEVELEEEEEEVKEEEEDDD. The segment covering 455 to 466 has biased composition (polar residues); it reads TPQSDQQESAPN. Residues 926-938 show a composition bias toward acidic residues; the sequence is EDSDEEDEEEEEG. Low complexity predominate over residues 1058–1069; it reads PSCSSSSGGFSP. Over residues 1119–1135 the composition is skewed to polar residues; that stretch reads SLATSYSSTAMNGNLAK.

Belongs to the Amer family. As to quaternary structure, interacts with CTNNB1, AXIN1, LRP6, KEAP1, APC and BTRC. Interacts with SCF (SKP1-CUL1-F-box protein) E3 ubiquitin-protein ligase complexes containing BTRC and/or FBXW11. Identified in the beta-catenin destruction complex containing CTNNB1, APC, AXIN1 and AXIN2. Interacts with WT1. Detected in fetal and adult kidney, brain and spleen.

The protein resides in the cytoplasm. It is found in the cell membrane. It localises to the nucleus. Functionally, regulator of the canonical Wnt signaling pathway. Acts by specifically binding phosphatidylinositol 4,5-bisphosphate (PtdIns(4,5)P2), translocating to the cell membrane and interacting with key regulators of the canonical Wnt signaling pathway, such as components of the beta-catenin destruction complex. Acts both as a positive and negative regulator of the Wnt signaling pathway, depending on the context: acts as a positive regulator by promoting LRP6 phosphorylation. Also acts as a negative regulator by acting as a scaffold protein for the beta-catenin destruction complex and promoting stabilization of Axin at the cell membrane. Promotes CTNNB1 ubiquitination and degradation. Involved in kidney development. This Homo sapiens (Human) protein is APC membrane recruitment protein 1 (AMER1).